Here is a 490-residue protein sequence, read N- to C-terminus: Katanin p60 ATPase-containing subunit A-like 1 (490 aa).

Met-1 is subject to N-acetylmethionine. The segment at 95-178 (DPAVWPPPVP…MQDGASDGDI (84 aa)) is disordered. Residues 116–127 (PNREVRPLRKDV) are compositionally biased toward basic and acidic residues. The segment covering 128–139 (AGVGARGPVGRA) has biased composition (low complexity). Residues 143-169 (SKSEKPSTNKDKDYRARGRDDKGRKNM) show a composition bias toward basic and acidic residues. A Phosphoserine modification is found at Ser-174. 248-255 (GPPGTGKT) serves as a coordination point for ATP.

This sequence belongs to the AAA ATPase family. Katanin p60 subunit A1 subfamily. A-like 1 sub-subfamily. Interacts with KATNB1 and KATNBL1.

The protein resides in the cytoplasm. The protein localises to the cytoskeleton. It localises to the spindle pole. Its subcellular location is the spindle. It carries out the reaction n ATP + n H2O + a microtubule = n ADP + n phosphate + (n+1) alpha/beta tubulin heterodimers.. Regulates microtubule dynamics in Sertoli cells, a process that is essential for spermiogenesis and male fertility. Severs microtubules in an ATP-dependent manner, promoting rapid reorganization of cellular microtubule arrays. Has microtubule-severing activity in vitro. The chain is Katanin p60 ATPase-containing subunit A-like 1 from Sorex araneus (Eurasian common shrew).